Here is a 240-residue protein sequence, read N- to C-terminus: uncharacterized protein (240 aa).

This is an uncharacterized protein from Acidianus two-tailed virus (ATV).